A 445-amino-acid polypeptide reads, in one-letter code: Nuclear envelope integral membrane protein 1 (445 aa).

A signal peptide spans Met-1–Gly-44. N-linked (GlcNAc...) asparagine glycosylation occurs at Asn-125. 5 consecutive transmembrane segments (helical) span residues Pro-161–Ser-181, Phe-186–Ile-206, Pro-216–Phe-236, Cys-245–Cys-265, and Leu-289–Ala-309. The interval Phe-186–Gln-297 is a; required for its colocalization with lamins at the nuclear envelope. Positions Thr-336 to Glu-405 are b; required for interaction with RAN-GTP. Positions Thr-336–Thr-445 are required for nuclear localization. Phosphoserine is present on residues Ser-368, Ser-424, and Ser-425. A compositionally biased stretch (acidic residues) spans Glu-418–Ser-430. The disordered stretch occupies residues Glu-418–Thr-445.

It belongs to the NEMP family. Homooligomer. Interacts with RAN-GTP. Interacts with EMD. Post-translationally, phosphorylation may regulate its interaction with RAN-GTP.

The protein resides in the nucleus inner membrane. The protein localises to the nucleus envelope. Its function is as follows. Together with EMD, contributes to nuclear envelope stiffness in germ cells. Required for female fertility. Essential for normal erythropoiesis. Required for efficient nuclear envelope opening and enucleation during the late stages of erythroblast maturation. This is Nuclear envelope integral membrane protein 1 (NEMP1) from Bos taurus (Bovine).